Here is a 1921-residue protein sequence, read N- to C-terminus: MSSFIPLNALEDYSLSSAEEHTRELQIEEGLKIFQKALHAQRQGKLDEAFDLYDALFKIDVIHLDIDDNNLSPTVGRLKYLAYKNHGILLLEHLAHNLDDLTTTEIRDQLQDILVQFADALLVDDSDDSFLKLFSDLARIIGLKRLSRFALECIVSSPSRVFTFSESLLNHDFLNPEEVAILQEVVLLAKQLQDYVSMDSPMYDLMASQVADVAPAKKPKYISWIEPTQFKAPPLKDLKETWRGSELVVEIGVPSWRGICKGLHDSLHRLTKRKKVLNGVTIRDPYLQIGVEISSVHGKLVDEEDLEDPEDDVEMMDIIDKPAEETIEVKTEEALDSTVKVEEIPAEINIGEVENKSSTEENKKQESPENGDKKEASGNGNGSAGPPVKDTTVKTEDRDSLTVALAIKRPAEGTTSSSQPPSKRTRGRGADEPAELEKQVDPGFFNNITSFVGSLDLKFPFVDLNQLDNEEQFYQDFKAVISNWGEQGSELFLKLSSAPESNLSVPVTQILDSAAQVDDDYGAPCNVLSISPDKFLEQMSESCSLSDFRFKIIEALLGNSSLVNEIWPSELIASVQIILNHLEPQILRDVRQMFFDGQTHSDSLIKQQLYVAEARYELVANEIIADKQRITENTSKLTKSALRDREWHKKTLHQRLLAWESCVITLLSMCKTRQLSVTELELRHTWVRLSLSQCDEAEISRMRQNYEEFQVQLLDEAPDLMVRFVNFPHIQTLSLDSVNGQISKLKVASTFAKIFSPDADEDIGTRIAMLESILKGSSDTSGDRESLSAREFLQHASIDFKHKLWYLLLDAYNESGEKRISVDGYIEMLTSLSYELETAGYRNMNPNQRHTILLRTLSTMNDTVGNLAKICRDTPALLESVSREKIHELAQLCLSFLRLLQVFNQFYDRRNPEEPTPFLWDKASEKFQTMMVKLWTFFYLLFRQLTNGLDENLPQTTISTLNDILSIVHEDLGHRKCCSFANGIFVDLTLDEIVRMKWNESEADLLQNIRCRFGIQLANEHYHPTDHGATPRALKRSDGLAFQDFIMNMVYRKPSSVHNIRADLRAVMDQLYEAIGDPDKNIASTSHNMTVLGRFTVAPVTWNYIENSLRGESFLPFMTSTDPVLSASTGGFYCVQGMLALAKFRQGKKAAAPGRTEDLQAAVKFFTNDILCCPTRYESWFGIANAYEMLTEDDLMWSAEKLDVPNSIVNINQRKALLCGLNSVNLMLQQRDEKPANPQLRTFFNAVMKESQWLFLSKLFYSATANPLHGASFRQADNKIFCGMKGLYMRQNLSLPRRKQCYQVVRACLTISINSKDQPPDWYSYYLRSKVYSKLKKTTQAILGDIQKSIAVAPDKINGDILLEPHYKLVAYLYKAVKRGKLTAAEAYKELKKTPHFVEYLGEDADMESGDDSDSDSEVGSDSETESTKEGPIASATEPAADTAPPVVPSEGTSGSPISIDDATPVPGPVTAVTAIAAPPTVAAKPEEKKKPLTRMEIKFYKSCIETLRRMKVLDKRKWHHRPPFLIARIHKEVFEDYRSAKEEMVPFFNLKNQSKAPVHIWKPDFERAGKHFQYVFDYLMFFIVLLDKTDDTDAITTIGKKLRRFNNGMVNHFEVWEFTCLTSNVLMKRVTRIPEKLPDAIIPSLQFDNFDRIAQGLQDKITKSKEPASYLLSLLYYASEFRRLNNGFGSTGVVDDTVVCLYLKMLIEYAGTSLLADNKSRSSTPVVLDGAKFEFQPGSAQPPALPAPATTATTAGKKEDGKKEKTRVTRKDILLRATNLIKACSNKVGENIKLVTTKGPPAVASSNGSSSNSGTRSNSEEKEKEPTEEPEKSTQDSDVEMADANQGNTETTVEPEAEGEADKSAEEDKSDKSAEEEKTDKFAEEEKSASAEPAGKNTPKSKSTGSNGVITIDEEYSAPE.

4 disordered regions span residues 350 to 439 (IGEV…LEKQ), 1402 to 1466 (GEDA…ATPV), 1738 to 1769 (PGSA…KTRV), and 1799 to 1921 (KGPP…SAPE). Composition is skewed to basic and acidic residues over residues 353-376 (VENK…KKEA) and 391-400 (TTVKTEDRDS). Residues 413–422 (GTTSSSQPPS) are compositionally biased toward polar residues. Positions 428 to 439 (RGADEPAELEKQ) are enriched in basic and acidic residues. Residues 1402–1425 (GEDADMESGDDSDSDSEVGSDSET) are compositionally biased toward acidic residues. A compositionally biased stretch (basic and acidic residues) spans 1757 to 1769 (GKKEDGKKEKTRV). Low complexity predominate over residues 1806-1818 (SSNGSSSNSGTRS). Basic and acidic residues-rich tracts occupy residues 1819–1836 (NSEE…KSTQ) and 1861–1890 (EADK…EKSA). Over residues 1899 to 1910 (TPKSKSTGSNGV) the composition is skewed to polar residues.

Belongs to the HIR3 family.

It is found in the nucleus. Has a role in a nucleosome assembly pathway that is required for the integrity of heterochromatin and proper chromosome segregation. The protein is Histone transcription regulator 3 homolog (HIR3) of Yarrowia lipolytica (strain CLIB 122 / E 150) (Yeast).